A 178-amino-acid polypeptide reads, in one-letter code: Large ribosomal subunit protein uL6 (178 aa).

This sequence belongs to the universal ribosomal protein uL6 family. In terms of assembly, part of the 50S ribosomal subunit.

In terms of biological role, this protein binds to the 23S rRNA, and is important in its secondary structure. It is located near the subunit interface in the base of the L7/L12 stalk, and near the tRNA binding site of the peptidyltransferase center. The protein is Large ribosomal subunit protein uL6 of Leifsonia xyli subsp. xyli (strain CTCB07).